The sequence spans 420 residues: D-tagatose-1,6-bisphosphate aldolase subunit GatZ (420 aa).

Belongs to the GatZ/KbaZ family. GatZ subfamily. As to quaternary structure, forms a complex with GatY.

It participates in carbohydrate metabolism; D-tagatose 6-phosphate degradation; D-glyceraldehyde 3-phosphate and glycerone phosphate from D-tagatose 6-phosphate: step 2/2. Its function is as follows. Component of the tagatose-1,6-bisphosphate aldolase GatYZ that is required for full activity and stability of the Y subunit. Could have a chaperone-like function for the proper and stable folding of GatY. When expressed alone, GatZ does not show any aldolase activity. Is involved in the catabolism of galactitol. This is D-tagatose-1,6-bisphosphate aldolase subunit GatZ from Escherichia coli (strain SMS-3-5 / SECEC).